We begin with the raw amino-acid sequence, 435 residues long: Xylose isomerase (435 aa).

Catalysis depends on residues His100 and Asp103. Positions 231, 267, 270, 295, 306, 308, and 338 each coordinate Mg(2+).

The protein belongs to the xylose isomerase family. In terms of assembly, homotetramer. Mg(2+) serves as cofactor.

It is found in the cytoplasm. It carries out the reaction alpha-D-xylose = alpha-D-xylulofuranose. This is Xylose isomerase from Brucella anthropi (strain ATCC 49188 / DSM 6882 / CCUG 24695 / JCM 21032 / LMG 3331 / NBRC 15819 / NCTC 12168 / Alc 37) (Ochrobactrum anthropi).